The sequence spans 132 residues: Small ribosomal subunit protein uS11 (132 aa).

It belongs to the universal ribosomal protein uS11 family. In terms of assembly, part of the 30S ribosomal subunit. Interacts with proteins S7 and S18. Binds to IF-3.

Located on the platform of the 30S subunit, it bridges several disparate RNA helices of the 16S rRNA. Forms part of the Shine-Dalgarno cleft in the 70S ribosome. This is Small ribosomal subunit protein uS11 from Chlamydia muridarum (strain MoPn / Nigg).